A 90-amino-acid polypeptide reads, in one-letter code: Probable Fe(2+)-trafficking protein (90 aa).

The protein belongs to the Fe(2+)-trafficking protein family.

In terms of biological role, could be a mediator in iron transactions between iron acquisition and iron-requiring processes, such as synthesis and/or repair of Fe-S clusters in biosynthetic enzymes. The polypeptide is Probable Fe(2+)-trafficking protein (Chromobacterium violaceum (strain ATCC 12472 / DSM 30191 / JCM 1249 / CCUG 213 / NBRC 12614 / NCIMB 9131 / NCTC 9757 / MK)).